Reading from the N-terminus, the 283-residue chain is uncharacterized protein (283 aa).

This is an uncharacterized protein from Methanocaldococcus jannaschii (strain ATCC 43067 / DSM 2661 / JAL-1 / JCM 10045 / NBRC 100440) (Methanococcus jannaschii).